The chain runs to 585 residues: MRFRSLISLLFLLFFTSSAYARFVSLNPSSTSLISDGIDGGSNLAGSGSVIKSVVSAPAEEKEEACEQTYGFMPCTKTALGNVFLILVYGFLMFTAATYLSAGSELLLEILGPGIVGGLFLPMLGALPDAMLIMVSGLSGDAATAQSQVSVGMGLLAGSTVMLLTVIWGTCTVVGKCDLRDSIAVNNQDTKGFHLKDSGVTVDIWTSYAARIMAISVIPFVIVQLPQMLGSTSGRQLSVLIALILSVLMLISYCVYQVFQPWIQRRRLAFAKHKHVISGILRHLKQHALGRLLDDEGQPDEHVIRKLFLTIDANNDGHLSAAELKALIIGISFEDIDFDKDDAVGKVLQDFDKTLDEQVDQEEFVRGIKQWLIQAMGGAPSGPEAGPRTMKFLDNFHVQTKREHALLGDNENGENDEEGGEVADPKWITIKAALLLLLGAAIAAAFADPLVDTVNNFSAATGIPSFFISFIALPLATNSSEAVSAIIFASRKKIRTASLTFSELCGGVTMNNILCLSVFLAIVYVRGLTWNFSSEVLVILIVCLVMGGFASFRTTYPLWTCFIAYLLYPFSLGLVYILDYWFGWS.

The next 5 membrane-spanning stretches (helical) occupy residues 83–103 (VFLI…LSAG), 106–126 (LLLE…MLGA), 149–169 (VSVG…VIWG), 212–232 (IMAI…LGST), and 239–259 (VLIA…YQVF). 2 EF-hand domains span residues 299 to 334 (PDEH…ISFE) and 339 to 374 (DKDD…WLIQ). The Ca(2+) site is built by D312, N314, D316, H318, E323, D352, D356, Q358, and E363. Transmembrane regions (helical) follow at residues 427 to 447 (WITI…AAFA) and 457 to 477 (FSAA…PLAT). An N-linked (GlcNAc...) asparagine glycan is attached at N478. The next 3 helical transmembrane spans lie at 505 to 525 (CGGV…IVYV), 532 to 552 (FSSE…FASF), and 558 to 578 (LWTC…VYIL).

It belongs to the Ca(2+):cation antiporter (CaCA) (TC 2.A.19) family. As to expression, expressed in roots, leaves, stems, petals, stamens, ovules and siliques.

The protein resides in the cell membrane. Its subcellular location is the vacuole membrane. Its function is as follows. Possesses sodium/calcium exchanger (NCX) activity when expressed in a heterologous mammalian CHO-K1 cell system. Does not possess cation/proton exchanger (CAX) or sodium/proton (NHX) activity when expressed in a heterologous yeast cell system. Has the ability to bind calcium in vitro. Participates in the maintenance of calcium homeostasis. May play a role in auxin response, diurnal rhythm and flowering time. Involved in salt stress response. The polypeptide is Sodium/calcium exchanger NCL (Arabidopsis thaliana (Mouse-ear cress)).